Here is a 288-residue protein sequence, read N- to C-terminus: Transmembrane and coiled-coil domain-containing protein 5A (288 aa).

Residues 10-192 adopt a coiled-coil conformation; it reads KRNIISLNMD…ALFLEREVSK (183 aa). A helical transmembrane segment spans residues 224-244; that stretch reads IFCCLFFITLFFIRLLSYMFF.

It belongs to the TMCO5 family.

It is found in the endoplasmic reticulum membrane. The protein resides in the nucleus membrane. This chain is Transmembrane and coiled-coil domain-containing protein 5A (TMCO5A), found in Homo sapiens (Human).